A 131-amino-acid polypeptide reads, in one-letter code: Large ribosomal subunit protein bL17 (131 aa).

It belongs to the bacterial ribosomal protein bL17 family. As to quaternary structure, part of the 50S ribosomal subunit. Contacts protein L32.

This Paraburkholderia phymatum (strain DSM 17167 / CIP 108236 / LMG 21445 / STM815) (Burkholderia phymatum) protein is Large ribosomal subunit protein bL17.